Reading from the N-terminus, the 59-residue chain is Large ribosomal subunit protein bL33 (59 aa).

The protein belongs to the bacterial ribosomal protein bL33 family.

This chain is Large ribosomal subunit protein bL33, found in Borrelia turicatae (strain 91E135).